We begin with the raw amino-acid sequence, 625 residues long: DNA mismatch repair protein MutL (625 aa).

Positions 404-427 are disordered; it reads PPPRNAPQSTGMPSMAGTGLPATS.

This sequence belongs to the DNA mismatch repair MutL/HexB family.

Its function is as follows. This protein is involved in the repair of mismatches in DNA. It is required for dam-dependent methyl-directed DNA mismatch repair. May act as a 'molecular matchmaker', a protein that promotes the formation of a stable complex between two or more DNA-binding proteins in an ATP-dependent manner without itself being part of a final effector complex. The sequence is that of DNA mismatch repair protein MutL from Xanthomonas oryzae pv. oryzae (strain MAFF 311018).